The following is a 178-amino-acid chain: Large ribosomal subunit protein uL6 (178 aa).

Belongs to the universal ribosomal protein uL6 family. In terms of assembly, part of the 50S ribosomal subunit.

This protein binds to the 23S rRNA, and is important in its secondary structure. It is located near the subunit interface in the base of the L7/L12 stalk, and near the tRNA binding site of the peptidyltransferase center. This Helicobacter hepaticus (strain ATCC 51449 / 3B1) protein is Large ribosomal subunit protein uL6.